We begin with the raw amino-acid sequence, 515 residues long: MIILKKQHDTIIVLDFGSQYNQLIARRIREFGVYSELHPHTITAEEIKAMNPKGIIFSGGPNSVYGEGALHCDEKIFDLGLPIFGICYGMQLMTQQFGGTVERANHREYGKAVLKVENESKLYANLPEEQVVWMSHGDLVTGLPEGFVVDATSESCPIAGMSNEAKNLYGVQFHPEVRHSEHGNDLIKNFVFGVCGCSEGWNMENFIEVELEKIRETVGDKKVLCALSGGVDSSVVAVLIHKAIGDQLTCIFVDHGLLRKGEAEGVMKTFSEGFHMNVIKVDAKERFMNKLKGVEDPEQKRKIIGNEFIYVFDDEASKLEGMDFLAQGTLYTDIVESGTATAQTIKSHHNVGGLPEDMQFKLIEPLNTLFKDEVRVLGSELGIPDEIVWRQPFPGPGLGIRVLGEITEEKLEIVRESDAILREEITKAGLDREIWQYFTALPGMRSVGVMGDERTYDYTVGIRAVTSIDGMTADWARIPWDVLEKISVRIVNEVKHVNRIVYDVTSKPPATIEWE.

The 191-residue stretch at 10 to 200 (TIIVLDFGSQ…VFGVCGCSEG (191 aa)) folds into the Glutamine amidotransferase type-1 domain. Cysteine 87 functions as the Nucleophile in the catalytic mechanism. Active-site residues include histidine 174 and glutamate 176. The GMPS ATP-PPase domain maps to 201 to 390 (WNMENFIEVE…LGIPDEIVWR (190 aa)). An ATP-binding site is contributed by 228–234 (SGGVDSS).

In terms of assembly, homodimer.

It catalyses the reaction XMP + L-glutamine + ATP + H2O = GMP + L-glutamate + AMP + diphosphate + 2 H(+). It participates in purine metabolism; GMP biosynthesis; GMP from XMP (L-Gln route): step 1/1. Catalyzes the synthesis of GMP from XMP. This Bacillus thuringiensis subsp. konkukian (strain 97-27) protein is GMP synthase [glutamine-hydrolyzing].